We begin with the raw amino-acid sequence, 644 residues long: Core protein VP4 (644 aa).

This sequence belongs to the orbivirus VP4 family.

The protein localises to the virion. The VP4 protein is one of the five proteins (with VP1, VP3, VP6 and VP7) which form the inner capsid of the virus. This is Core protein VP4 (Segment-4) from Bluetongue virus 13 (isolate USA) (BTV 13).